The following is a 387-amino-acid chain: Gamma-butyrobetaine dioxygenase (387 aa).

Residues Cys38, Cys40, Cys43, and His82 each coordinate Zn(2+). Residues His202, Asp204, and His347 each coordinate Fe cation. Ser351 carries the phosphoserine modification.

It belongs to the gamma-BBH/TMLD family. Fe(2+) serves as cofactor. The cofactor is L-ascorbate.

It localises to the cytoplasm. The catalysed reaction is 4-(trimethylamino)butanoate + 2-oxoglutarate + O2 = carnitine + succinate + CO2. It participates in amine and polyamine biosynthesis; carnitine biosynthesis. In terms of biological role, catalyzes the formation of L-carnitine from gamma-butyrobetaine. This is Gamma-butyrobetaine dioxygenase (BBOX1) from Pongo abelii (Sumatran orangutan).